The chain runs to 244 residues: Pyridoxine 5'-phosphate synthase (244 aa).

Asparagine 7 serves as a coordination point for 3-amino-2-oxopropyl phosphate. 9–10 (DH) lines the 1-deoxy-D-xylulose 5-phosphate pocket. Arginine 18 serves as a coordination point for 3-amino-2-oxopropyl phosphate. Catalysis depends on histidine 43, which acts as the Proton acceptor. 2 residues coordinate 1-deoxy-D-xylulose 5-phosphate: arginine 45 and histidine 50. The active-site Proton acceptor is the glutamate 70. A 1-deoxy-D-xylulose 5-phosphate-binding site is contributed by threonine 100. Histidine 191 acts as the Proton donor in catalysis. 3-amino-2-oxopropyl phosphate-binding positions include glycine 192 and 213–214 (GH).

Belongs to the PNP synthase family. As to quaternary structure, homooctamer; tetramer of dimers.

The protein resides in the cytoplasm. The catalysed reaction is 3-amino-2-oxopropyl phosphate + 1-deoxy-D-xylulose 5-phosphate = pyridoxine 5'-phosphate + phosphate + 2 H2O + H(+). It participates in cofactor biosynthesis; pyridoxine 5'-phosphate biosynthesis; pyridoxine 5'-phosphate from D-erythrose 4-phosphate: step 5/5. Catalyzes the complicated ring closure reaction between the two acyclic compounds 1-deoxy-D-xylulose-5-phosphate (DXP) and 3-amino-2-oxopropyl phosphate (1-amino-acetone-3-phosphate or AAP) to form pyridoxine 5'-phosphate (PNP) and inorganic phosphate. The chain is Pyridoxine 5'-phosphate synthase from Laribacter hongkongensis (strain HLHK9).